Consider the following 173-residue polypeptide: Adenine phosphoribosyltransferase (173 aa).

It belongs to the purine/pyrimidine phosphoribosyltransferase family. Homodimer.

The protein resides in the cytoplasm. It carries out the reaction AMP + diphosphate = 5-phospho-alpha-D-ribose 1-diphosphate + adenine. The protein operates within purine metabolism; AMP biosynthesis via salvage pathway; AMP from adenine: step 1/1. Catalyzes a salvage reaction resulting in the formation of AMP, that is energically less costly than de novo synthesis. This Thermotoga maritima (strain ATCC 43589 / DSM 3109 / JCM 10099 / NBRC 100826 / MSB8) protein is Adenine phosphoribosyltransferase.